The sequence spans 103 residues: Co-chaperonin GroES (103 aa).

It belongs to the GroES chaperonin family. As to quaternary structure, heptamer of 7 subunits arranged in a ring. Interacts with the chaperonin GroEL.

Its subcellular location is the cytoplasm. Its function is as follows. Together with the chaperonin GroEL, plays an essential role in assisting protein folding. The GroEL-GroES system forms a nano-cage that allows encapsulation of the non-native substrate proteins and provides a physical environment optimized to promote and accelerate protein folding. GroES binds to the apical surface of the GroEL ring, thereby capping the opening of the GroEL channel. This chain is Co-chaperonin GroES, found in Gloeothece citriformis (strain PCC 7424) (Cyanothece sp. (strain PCC 7424)).